Reading from the N-terminus, the 168-residue chain is Cell division inhibitor SulA (168 aa).

Residues 106 to 112 are ftsZ binding; it reads ALQTGNY. The lon protease binding stretch occupies residues 161-168; sequence KIHSSLYH.

The protein belongs to the SulA family. Interacts with FtsZ. In terms of processing, is rapidly cleaved and degraded by the Lon protease once DNA damage is repaired.

Its function is as follows. Component of the SOS system and an inhibitor of cell division. Accumulation of SulA causes rapid cessation of cell division and the appearance of long, non-septate filaments. In the presence of GTP, binds a polymerization-competent form of FtsZ in a 1:1 ratio, thus inhibiting FtsZ polymerization and therefore preventing it from participating in the assembly of the Z ring. This mechanism prevents the premature segregation of damaged DNA to daughter cells during cell division. This is Cell division inhibitor SulA from Serratia marcescens.